A 514-amino-acid chain; its full sequence is 2,3-bisphosphoglycerate-independent phosphoglycerate mutase (514 aa).

Mn(2+)-binding residues include Asp-14 and Ser-64. Ser-64 (phosphoserine intermediate) is an active-site residue. Substrate is bound by residues His-125, 155–156 (RD), Arg-187, Arg-193, 263–266 (RADR), and Lys-336. Mn(2+) is bound by residues Asp-403, His-407, Asp-444, His-445, and His-463.

This sequence belongs to the BPG-independent phosphoglycerate mutase family. In terms of assembly, monomer. Requires Mn(2+) as cofactor.

The catalysed reaction is (2R)-2-phosphoglycerate = (2R)-3-phosphoglycerate. It functions in the pathway carbohydrate degradation; glycolysis; pyruvate from D-glyceraldehyde 3-phosphate: step 3/5. Its activity is regulated as follows. Insensitive to vanadate. In terms of biological role, catalyzes the interconversion of 2-phosphoglycerate (2-PGA) and 3-phosphoglycerate (3-PGA). The chain is 2,3-bisphosphoglycerate-independent phosphoglycerate mutase from Escherichia coli (strain K12).